A 254-amino-acid polypeptide reads, in one-letter code: Nickel import ATP-binding protein NikD (254 aa).

Residues 2 to 241 enclose the ABC transporter domain; that stretch reads PQQIELRNIA…PKHTVTRSLV (240 aa). ATP is bound at residue 36–43; that stretch reads GGSGSGKS.

Belongs to the ABC transporter superfamily. Nickel importer (TC 3.A.1.5.3) family. The complex is composed of two ATP-binding proteins (NikD and NikE), two transmembrane proteins (NikB and NikC) and a solute-binding protein (NikA).

It is found in the cell inner membrane. It catalyses the reaction Ni(2+)(out) + ATP + H2O = Ni(2+)(in) + ADP + phosphate + H(+). Part of the ABC transporter complex NikABCDE involved in nickel import. Responsible for energy coupling to the transport system. The protein is Nickel import ATP-binding protein NikD of Shigella boydii serotype 4 (strain Sb227).